The sequence spans 295 residues: Tyrosine recombinase XerD (295 aa).

The Core-binding (CB) domain occupies 1–85; the sequence is METIIEEYLR…TIRSFHQFAI (85 aa). Residues 106 to 289 form the Tyr recombinase domain; it reads KLPDVLNVDE…SKSQIRKMYN (184 aa). Active-site residues include arginine 146, lysine 170, histidine 241, arginine 244, and histidine 267. Tyrosine 276 acts as the O-(3'-phospho-DNA)-tyrosine intermediate in catalysis.

The protein belongs to the 'phage' integrase family. XerD subfamily. Forms a cyclic heterotetrameric complex composed of two molecules of XerC and two molecules of XerD.

It is found in the cytoplasm. Site-specific tyrosine recombinase, which acts by catalyzing the cutting and rejoining of the recombining DNA molecules. The XerC-XerD complex is essential to convert dimers of the bacterial chromosome into monomers to permit their segregation at cell division. It also contributes to the segregational stability of plasmids. The chain is Tyrosine recombinase XerD from Staphylococcus aureus (strain COL).